A 455-amino-acid chain; its full sequence is Ribulose bisphosphate carboxylase large chain (455 aa).

An N6,N6,N6-trimethyllysine modification is found at Lys-5. Residues Asn-114 and Thr-164 each coordinate substrate. Lys-166 serves as the catalytic Proton acceptor. Lys-168 is a binding site for substrate. Mg(2+) contacts are provided by Lys-192, Asp-194, and Glu-195. At Lys-192 the chain carries N6-carboxylysine. His-285 acts as the Proton acceptor in catalysis. Arg-286, His-318, and Ser-370 together coordinate substrate.

This sequence belongs to the RuBisCO large chain family. Type I subfamily. As to quaternary structure, heterohexadecamer of 8 large chains and 8 small chains; disulfide-linked. The disulfide link is formed within the large subunit homodimers. The cofactor is Mg(2+). The disulfide bond which can form in the large chain dimeric partners within the hexadecamer appears to be associated with oxidative stress and protein turnover.

It localises to the plastid. Its subcellular location is the chloroplast. The enzyme catalyses 2 (2R)-3-phosphoglycerate + 2 H(+) = D-ribulose 1,5-bisphosphate + CO2 + H2O. It catalyses the reaction D-ribulose 1,5-bisphosphate + O2 = 2-phosphoglycolate + (2R)-3-phosphoglycerate + 2 H(+). Functionally, ruBisCO catalyzes two reactions: the carboxylation of D-ribulose 1,5-bisphosphate, the primary event in carbon dioxide fixation, as well as the oxidative fragmentation of the pentose substrate in the photorespiration process. Both reactions occur simultaneously and in competition at the same active site. This Lupinus digitatus (Lupine) protein is Ribulose bisphosphate carboxylase large chain.